A 199-amino-acid chain; its full sequence is Probable GTP-binding protein EngB (199 aa).

Residues 22–196 form the EngB-type G domain; it reads NFSEVAFLGR…EDVIINQTLG (175 aa). Residues 30-37, 57-61, 82-85, 152-155, and 175-177 contribute to the GTP site; these read GRSNVGKS, GKTQL, DLPG, TKCD, and VSN. The Mg(2+) site is built by serine 37 and threonine 59.

The protein belongs to the TRAFAC class TrmE-Era-EngA-EngB-Septin-like GTPase superfamily. EngB GTPase family. The cofactor is Mg(2+).

Necessary for normal cell division and for the maintenance of normal septation. This Campylobacter jejuni subsp. doylei (strain ATCC BAA-1458 / RM4099 / 269.97) protein is Probable GTP-binding protein EngB.